Consider the following 235-residue polypeptide: tRNA (guanine-N(1)-)-methyltransferase (235 aa).

S-adenosyl-L-methionine-binding positions include Gly-112 and 131–136; that span reads LGDFVL.

It belongs to the RNA methyltransferase TrmD family. In terms of assembly, homodimer.

Its subcellular location is the cytoplasm. It carries out the reaction guanosine(37) in tRNA + S-adenosyl-L-methionine = N(1)-methylguanosine(37) in tRNA + S-adenosyl-L-homocysteine + H(+). Functionally, specifically methylates guanosine-37 in various tRNAs. This Synechococcus elongatus (strain ATCC 33912 / PCC 7942 / FACHB-805) (Anacystis nidulans R2) protein is tRNA (guanine-N(1)-)-methyltransferase.